The sequence spans 251 residues: MNTNYPILEIKNLKACINENEILKDLNLKIHKGEIHAIMGPNGSGKSTFSKVLAGHPAYNILSGDILFKGSSILNLDPEERSHMGIFLAFQYPIEIPGVSNEDFLRLAYNSKQKFLNKDEVDPISFFTIINEKLKLVDMSPVFLSRNVNEGFSGGEKKRNEILQMILLDSELSILDETDSGLDIDALKIISKGINTFMNQNKAIILITHYQRLLDYVQPNYVHVMQNGKIIKTGTADLAKELESKGYEWLK.

An ABC transporter domain is found at 8-250 (LEIKNLKACI…ELESKGYEWL (243 aa)). An ATP-binding site is contributed by 40 to 47 (GPNGSGKS).

It belongs to the ABC transporter superfamily. Ycf16 family.

The protein localises to the plastid. The protein resides in the chloroplast. This Trieres chinensis (Marine centric diatom) protein is Probable ATP-dependent transporter ycf16 (ycf16).